Here is a 92-residue protein sequence, read N- to C-terminus: Putative membrane protein insertion efficiency factor (92 aa).

The protein belongs to the UPF0161 family.

The protein resides in the cell inner membrane. In terms of biological role, could be involved in insertion of integral membrane proteins into the membrane. The polypeptide is Putative membrane protein insertion efficiency factor (Synechococcus sp. (strain CC9605)).